The sequence spans 102 residues: Putative protein p7 (102 aa).

The protein is Putative protein p7 (7) of Escherichia coli (Bacteriophage APSE-1).